The chain runs to 226 residues: Neuron-specific vesicular protein calcyon (226 aa).

The tract at residues 1–23 is disordered; the sequence is MVKLGCSFSGKPGKETGDQDGAA. Over 1–88 the chain is Extracellular; sequence MVKLGCSFSG…EEGRRLPTAR (88 aa). Residues 89-109 traverse the membrane as a helical segment; it reads MIAFAMALLGCVLIMYKAIWY. The Cytoplasmic portion of the chain corresponds to 110-226; it reads DQFTCPDGFL…AEDVPSQSPK (117 aa). The disordered stretch occupies residues 189–226; that stretch reads TAAAAAAAEGNEPSGKPLDMREKEDPQKAEDVPSQSPK. The segment covering 206-219 has biased composition (basic and acidic residues); it reads LDMREKEDPQKAED.

This sequence belongs to the NSG family. As to quaternary structure, interacts with CLTA. As to expression, expressed exclusively in neurons (at protein level). In all age groups, expressed at significantly higher levels in the medial prefrontal and orbital frontal cortices of spontaneously hypertensive rats (SHR), a model of attention deficit-hyperactivity disorder, than Wistar Kyoto (WKY) animals. In the motor cortex, dorsal striatum and nucleus accumbens, expression is significantly elevated in SHR only in younger animals.

It is found in the cytoplasmic vesicle membrane. The protein resides in the cell membrane. Functionally, interacts with clathrin light chain A and stimulates clathrin self-assembly and clathrin-mediated endocytosis. This is Neuron-specific vesicular protein calcyon (Caly) from Rattus norvegicus (Rat).